The primary structure comprises 242 residues: Lysosomal membrane ascorbate-dependent ferrireductase CYB561A3 (242 aa).

Over 1 to 7 the chain is Cytoplasmic; that stretch reads MVSGRFY. Residues 8–28 form a helical membrane-spanning segment; it reads LSCLLLGSLGSMCILFTIYWM. The 208-residue stretch at 12–219 folds into the Cytochrome b561 domain; that stretch reads LLGSLGSMCI…FGLLVLYILL (208 aa). Residues 29–45 lie on the Lumenal side of the membrane; sequence QYWRGGFAWNGSIYMFN. Asn38 carries N-linked (GlcNAc...) asparagine glycosylation. The chain crosses the membrane as a helical span at residues 46–66; sequence WHPVLMVAGMVVFYGGASLVY. The heme b site is built by His47 and Arg67. The Cytoplasmic portion of the chain corresponds to 67–83; sequence RLPQSWVGPKLPWKLLH. Residues Lys76 and Lys80 each coordinate L-ascorbate. His83 provides a ligand contact to heme b. Residues 84–104 form a helical membrane-spanning segment; the sequence is AALHLMAFVLTVVGLVAVFTF. At 105 to 119 the chain is on the lumenal side; sequence HNHGRTANLYSLHSW. Residues 112 to 115 and His117 each bind heme b; that span reads NLYS. The helical transmembrane segment at 120-140 threads the bilayer; sequence LGITTVFLFACQWFLGFAVFL. The Cytoplasmic segment spans residues 141-154; that stretch reads LPWASMWLRSLLKP. Arg149 serves as a coordination point for L-ascorbate. The helical transmembrane segment at 155-175 threads the bilayer; it reads IHVFFGAAILSLSIASVISGI. The heme b site is built by His156 and Glu177. Residues 176-202 lie on the Lumenal side of the membrane; that stretch reads NEKLFFSLKNTTRPYHSLPSEAVFANS. Residues 203-223 traverse the membrane as a helical segment; sequence TGMLVVAFGLLVLYILLASSW. Lys224 contributes to the heme b binding site. The Cytoplasmic portion of the chain corresponds to 224–242; that stretch reads KRPEPGILTDRQPLLHDGE.

In terms of assembly, homodimer. Heme b serves as cofactor. Post-translationally, N-glycosylated.

It localises to the late endosome membrane. It is found in the lysosome membrane. It catalyses the reaction Fe(3+)(out) + L-ascorbate(in) = monodehydro-L-ascorbate radical(in) + Fe(2+)(out) + H(+). Functionally, transmembrane reductase that uses ascorbate as an electron donor in the cytoplasm and transfers electrons across membranes to reduce iron cations Fe(3+) into Fe(2+) in the lumen of the late endosome and lysosome. Reduced iron can then be extruded from the late endosome and lysosome to the cytoplasm by divalent metal-specific transporters. It is therefore most probably involved in endosomal and lysosomal cellular iron homeostasis. The polypeptide is Lysosomal membrane ascorbate-dependent ferrireductase CYB561A3 (Homo sapiens (Human)).